The primary structure comprises 461 residues: D-phenylhydantoinase (461 aa).

His-59, His-61, and Lys-151 together coordinate a divalent metal cation. At Lys-151 the chain carries N6-carboxylysine. Tyr-156 provides a ligand contact to substrate. Positions 182 and 239 each coordinate a divalent metal cation. Ser-286 lines the substrate pocket. A divalent metal cation is bound at residue Asp-313. A substrate-binding site is contributed by Asn-335.

This sequence belongs to the metallo-dependent hydrolases superfamily. Hydantoinase/dihydropyrimidinase family. As to quaternary structure, homotetramer. A divalent metal cation is required as a cofactor. In terms of processing, carboxylation allows a single lysine to coordinate two divalent metal cations.

The catalysed reaction is D-5-phenylhydantoin + H2O = N-carbamoyl-D-phenylglycine + H(+). Its function is as follows. Catalyzes the stereospecific hydrolysis of the cyclic amide bond of D-hydantoin derivatives with an aromatic side chains at the 5'-position. Has no activity on dihydropyrimidines. The physiological function is unknown. The protein is D-phenylhydantoinase of Escherichia coli (strain UTI89 / UPEC).